Here is a 392-residue protein sequence, read N- to C-terminus: Chorismate synthase (392 aa).

Residues Arg40 and Arg46 each contribute to the NADP(+) site. Residues 135-137 (RAS), 256-257 (QA), Gly300, 315-319 (KPIST), and Arg341 contribute to the FMN site.

It belongs to the chorismate synthase family. As to quaternary structure, homotetramer. Requires FMNH2 as cofactor.

It carries out the reaction 5-O-(1-carboxyvinyl)-3-phosphoshikimate = chorismate + phosphate. It participates in metabolic intermediate biosynthesis; chorismate biosynthesis; chorismate from D-erythrose 4-phosphate and phosphoenolpyruvate: step 7/7. Functionally, catalyzes the anti-1,4-elimination of the C-3 phosphate and the C-6 proR hydrogen from 5-enolpyruvylshikimate-3-phosphate (EPSP) to yield chorismate, which is the branch point compound that serves as the starting substrate for the three terminal pathways of aromatic amino acid biosynthesis. This reaction introduces a second double bond into the aromatic ring system. The sequence is that of Chorismate synthase from Acidothermus cellulolyticus (strain ATCC 43068 / DSM 8971 / 11B).